The sequence spans 310 residues: MNKALPKAIFLMGPTASGKTNLAIELRKRFPVELISVDSALIYKGMDIGTAKPNAEELLQAPHRLIDILEPTESYSAADFRRDALKEMDDIVAQGKIPLLVGGTMLYYKALLEGLSPLPAADADIRAQIEQEAEQFGWEAMHDQLKSIDPVSAERIHPNDPQRLSRALEVFRISGKTLTELTQIKGDALPYEVHQFAIAPKERAEIHRRIELRFANMMEEGFEAEARALYERDDLHADLPSIRCVGYRQMWDYFDGEGTLDEAVFRGICATRQLAKRQITWLRSWKELTWLDSDDIDGALELISTQLEKK.

Residue 13–20 coordinates ATP; sequence GPTASGKT. 15–20 lines the substrate pocket; it reads TASGKT. Interaction with substrate tRNA regions lie at residues 38-41, 162-166, 243-248, and 276-283; these read DSAL, QRLSR, RCVGYR, and KRQITWLR.

The protein belongs to the IPP transferase family. In terms of assembly, monomer. Mg(2+) is required as a cofactor.

It carries out the reaction adenosine(37) in tRNA + dimethylallyl diphosphate = N(6)-dimethylallyladenosine(37) in tRNA + diphosphate. Catalyzes the transfer of a dimethylallyl group onto the adenine at position 37 in tRNAs that read codons beginning with uridine, leading to the formation of N6-(dimethylallyl)adenosine (i(6)A). The sequence is that of tRNA dimethylallyltransferase from Aliivibrio fischeri (strain MJ11) (Vibrio fischeri).